We begin with the raw amino-acid sequence, 530 residues long: Phosphoenolpyruvate carboxykinase (ATP) (530 aa).

Positions 58, 195, and 201 each coordinate substrate. ATP contacts are provided by residues Lys-201, His-220, and 236–244 (GLSGTGKTT). Residues Lys-201 and His-220 each coordinate Mn(2+). Residue Asp-257 participates in Mn(2+) binding. ATP contacts are provided by residues Glu-285, Arg-321, 440-441 (RI), and Thr-446. Substrate is bound at residue Arg-321.

It belongs to the phosphoenolpyruvate carboxykinase (ATP) family. It depends on Mn(2+) as a cofactor.

The protein localises to the cytoplasm. The catalysed reaction is oxaloacetate + ATP = phosphoenolpyruvate + ADP + CO2. The protein operates within carbohydrate biosynthesis; gluconeogenesis. Involved in the gluconeogenesis. Catalyzes the conversion of oxaloacetate (OAA) to phosphoenolpyruvate (PEP) through direct phosphoryl transfer between the nucleoside triphosphate and OAA. This is Phosphoenolpyruvate carboxykinase (ATP) from Staphylococcus haemolyticus (strain JCSC1435).